We begin with the raw amino-acid sequence, 219 residues long: Nodulation protein NolA (219 aa).

The region spanning 10 to 79 (RWRIGELAEA…LHEIRKAMEG (70 aa)) is the HTH merR-type domain. Positions 13-32 (IGELAEATGVTVRTLHHYEH) form a DNA-binding region, H-T-H motif.

Involved in genotype-specific nodulation of soybeans. The sequence is that of Nodulation protein NolA (nolA) from Bradyrhizobium elkanii.